The chain runs to 296 residues: Enoyl-CoA hydratase domain-containing protein 2, mitochondrial (296 aa).

Lysine 101 bears the N6-acetyllysine; alternate mark. Position 101 is an N6-succinyllysine; alternate (lysine 101).

Belongs to the enoyl-CoA hydratase/isomerase family.

It localises to the mitochondrion. This chain is Enoyl-CoA hydratase domain-containing protein 2, mitochondrial (ECHDC2), found in Bos taurus (Bovine).